Here is a 431-residue protein sequence, read N- to C-terminus: Serine/threonine-protein kinase Sgk1 (431 aa).

The necessary for localization to the mitochondria stretch occupies residues 1 to 60; that stretch reads MTVKTEAARDTLTYSRMRGMVAILIAFMKQRRMGLNDFIQKIANNSYACKHPEVQSILKI. The tract at residues 64 to 92 is disordered; sequence QEPELMNANPSPPPSPSQQINLGPSSNPH. A Phosphoserine modification is found at Ser74. The residue at position 78 (Ser78) is a Phosphoserine; by MAPK7. Polar residues predominate over residues 81-91; the sequence is QQINLGPSSNP. Residues 98–355 enclose the Protein kinase domain; sequence FHFLKVIGKG…FMEIKNHVFF (258 aa). Residues 104–112 and Lys127 contribute to the ATP site; that span reads IGKGSFGKV. A Nuclear localization signal motif is present at residues 131 to 141; it reads KKAILKKKEEK. Asp222 functions as the Proton acceptor in the catalytic mechanism. Thr256 is subject to Phosphothreonine; by PDPK1. Residues 356–431 form the AGC-kinase C-terminal domain; the sequence is SLINWEDLIN…SYAPPMDSFL (76 aa). The residue at position 369 (Thr369) is a Phosphothreonine; by PKA. 3 positions are modified to phosphoserine: Ser397, Ser401, and Ser422.

The protein belongs to the protein kinase superfamily. AGC Ser/Thr protein kinase family. As to quaternary structure, homodimer; disulfide-linked. Forms a trimeric complex with FBXW7 and NOTCH1. Interacts with MAPK3/ERK1, MAPK1/ERK2, MAP2K1/MEK1, MAP2K2/MEK2, NEDD4, NEDD4L, MAPT/TAU, MAPK7, CREB1, SLC9A3R2/NHERF2 and KCNJ1/ROMK1. Associates with the mammalian target of rapamycin complex 2 (mTORC2) via an interaction with MAPKAP1/SIN1. Regulated by phosphorylation. Activated by phosphorylation on Ser-422 by mTORC2, transforming it into a substrate for PDPK1 which phosphorylates it on Thr-256. Phosphorylation on Ser-397 and Ser-401 are also essential for its activity. Phosphorylation on Ser-78 by MAPK7 is required for growth factor-induced cell cycle progression. In terms of processing, ubiquitinated by NEDD4L; which promotes proteasomal degradation. Ubiquitinated by SYVN1 at the endoplasmic reticulum; which promotes rapid proteasomal degradation and maintains a high turnover rate in resting cells.

The protein resides in the cytoplasm. It localises to the nucleus. It is found in the endoplasmic reticulum membrane. Its subcellular location is the cell membrane. The protein localises to the mitochondrion. It carries out the reaction L-seryl-[protein] + ATP = O-phospho-L-seryl-[protein] + ADP + H(+). It catalyses the reaction L-threonyl-[protein] + ATP = O-phospho-L-threonyl-[protein] + ADP + H(+). Two specific sites, one in the kinase domain (Thr-256) and the other in the C-terminal regulatory region (Ser-422), need to be phosphorylated for its full activation. Phosphorylation at Ser-397 and Ser-401 are also essential for its activity. Activated by WNK1, WNK2, WNK3 and WNK4; which promote phosphorylation by mTORC2. Its function is as follows. Serine/threonine-protein kinase which is involved in the regulation of a wide variety of ion channels, membrane transporters, cellular enzymes, transcription factors, neuronal excitability, cell growth, proliferation, survival, migration and apoptosis. Plays an important role in cellular stress response. Contributes to regulation of renal Na(+) retention, renal K(+) elimination, salt appetite, gastric acid secretion, intestinal Na(+)/H(+) exchange and nutrient transport, insulin-dependent salt sensitivity of blood pressure, salt sensitivity of peripheral glucose uptake, cardiac repolarization and memory consolidation. Up-regulates Na(+) channels: SCNN1A/ENAC, SCN5A and ASIC1/ACCN2, K(+) channels: KCNJ1/ROMK1, KCNA1-5, KCNQ1-5 and KCNE1, epithelial Ca(2+) channels: TRPV5 and TRPV6, chloride channels: BSND, CLCN2 and CFTR, glutamate transporters: SLC1A3/EAAT1, SLC1A2 /EAAT2, SLC1A1/EAAT3, SLC1A6/EAAT4 and SLC1A7/EAAT5, amino acid transporters: SLC1A5/ASCT2, SLC38A1/SN1 and SLC6A19, creatine transporter: SLC6A8, Na(+)/dicarboxylate cotransporter: SLC13A2/NADC1, Na(+)-dependent phosphate cotransporter: SLC34A2/NAPI-2B, glutamate receptor: GRIK2/GLUR6. Up-regulates carriers: SLC9A3/NHE3, SLC12A1/NKCC2, SLC12A3/NCC, SLC5A3/SMIT, SLC2A1/GLUT1, SLC5A1/SGLT1 and SLC15A2/PEPT2. Regulates enzymes: GSK3A/B, PMM2 and Na(+)/K(+) ATPase, and transcription factors: CTNNB1 and nuclear factor NF-kappa-B. Stimulates sodium transport into epithelial cells by enhancing the stability and expression of SCNN1A/ENAC. This is achieved by phosphorylating the NEDD4L ubiquitin E3 ligase, promoting its interaction with 14-3-3 proteins, thereby preventing it from binding to SCNN1A/ENAC and targeting it for degradation. Regulates store-operated Ca(+2) entry (SOCE) by stimulating ORAI1 and STIM1. Regulates KCNJ1/ROMK1 directly via its phosphorylation or indirectly via increased interaction with SLC9A3R2/NHERF2. Phosphorylates MDM2 and activates MDM2-dependent ubiquitination of p53/TP53. Phosphorylates MAPT/TAU and mediates microtubule depolymerization and neurite formation in hippocampal neurons. Phosphorylates SLC2A4/GLUT4 and up-regulates its activity. Phosphorylates APBB1/FE65 and promotes its localization to the nucleus. Phosphorylates MAPK1/ERK2 and activates it by enhancing its interaction with MAP2K1/MEK1 and MAP2K2/MEK2. Phosphorylates FBXW7 and plays an inhibitory role in the NOTCH1 signaling. Phosphorylates FOXO1 resulting in its relocalization from the nucleus to the cytoplasm. Phosphorylates FOXO3, promoting its exit from the nucleus and interference with FOXO3-dependent transcription. Phosphorylates BRAF and MAP3K3/MEKK3 and inhibits their activity. Phosphorylates SLC9A3/NHE3 in response to dexamethasone, resulting in its activation and increased localization at the cell membrane. Phosphorylates CREB1. Necessary for vascular remodeling during angiogenesis. In Bos taurus (Bovine), this protein is Serine/threonine-protein kinase Sgk1 (SGK1).